The following is a 161-amino-acid chain: S-ribosylhomocysteine lyase (161 aa).

Fe cation contacts are provided by His-57, His-61, and Cys-124.

Belongs to the LuxS family. In terms of assembly, homodimer. Requires Fe cation as cofactor.

It carries out the reaction S-(5-deoxy-D-ribos-5-yl)-L-homocysteine = (S)-4,5-dihydroxypentane-2,3-dione + L-homocysteine. In terms of biological role, involved in the synthesis of autoinducer 2 (AI-2) which is secreted by bacteria and is used to communicate both the cell density and the metabolic potential of the environment. The regulation of gene expression in response to changes in cell density is called quorum sensing. Catalyzes the transformation of S-ribosylhomocysteine (RHC) to homocysteine (HC) and 4,5-dihydroxy-2,3-pentadione (DPD). This Macrococcus caseolyticus (strain JCSC5402) (Macrococcoides caseolyticum) protein is S-ribosylhomocysteine lyase.